We begin with the raw amino-acid sequence, 513 residues long: Light-independent protochlorophyllide reductase subunit B (513 aa).

Residue D36 participates in [4Fe-4S] cluster binding. Residue D299 is the Proton donor of the active site. 434–435 (GM) contributes to the substrate binding site.

It belongs to the ChlB/BchB/BchZ family. As to quaternary structure, protochlorophyllide reductase is composed of three subunits; ChlL, ChlN and ChlB. Forms a heterotetramer of two ChlB and two ChlN subunits. It depends on [4Fe-4S] cluster as a cofactor.

It localises to the plastid. Its subcellular location is the chloroplast. It catalyses the reaction chlorophyllide a + oxidized 2[4Fe-4S]-[ferredoxin] + 2 ADP + 2 phosphate = protochlorophyllide a + reduced 2[4Fe-4S]-[ferredoxin] + 2 ATP + 2 H2O. The protein operates within porphyrin-containing compound metabolism; chlorophyll biosynthesis (light-independent). Component of the dark-operative protochlorophyllide reductase (DPOR) that uses Mg-ATP and reduced ferredoxin to reduce ring D of protochlorophyllide (Pchlide) to form chlorophyllide a (Chlide). This reaction is light-independent. The NB-protein (ChlN-ChlB) is the catalytic component of the complex. This Marchantia polymorpha (Common liverwort) protein is Light-independent protochlorophyllide reductase subunit B.